A 288-amino-acid polypeptide reads, in one-letter code: Zinc finger protein 42 (288 aa).

Basic and acidic residues-rich tracts occupy residues 1–11 and 26–38; these read MNEQKMNEQMK and ALDRLTLKQDEAR. The interval 1 to 48 is disordered; the sequence is MNEQKMNEQMKKTAKTSGQKGPGGRALDRLTLKQDEARPVQNTRVEAP. 4 consecutive C2H2-type zinc fingers follow at residues 170–194, 199–221, 227–251, and 258–281; these read LECPQAGCKKKLRGKTALRKHMLVH, HVCAECGKAFTESSKLKRHFLVH, YQCTFEGCGKRFSLDFNLRTHIRIH, and VCPFDGCEKSFIQSNNQKIHILTH. Residues K213 and K215 each participate in a glycyl lysine isopeptide (Lys-Gly) (interchain with G-Cter in ubiquitin) cross-link.

Belongs to the krueppel C2H2-type zinc-finger protein family. Polyubiquitinated by RNF12, leading to proteasomal degradation. As to expression, restricted to testis, to germ cells in the early stages of spermatogenesis. Not expressed in spermatids, nor spermatozoa. Expressed in embryonic stem (ES) cells.

It is found in the nucleus. In terms of biological role, involved in the reprogramming of X-chromosome inactivation during the acquisition of pluripotency. Required for efficient elongation of TSIX, a non-coding RNA antisense to XIST. Binds DXPas34 enhancer within the TSIX promoter. Involved in ES cell self-renewal. This chain is Zinc finger protein 42 (Zfp42), found in Mus musculus (Mouse).